Reading from the N-terminus, the 743-residue chain is Phosphoribosylformylglycinamidine synthase subunit PurL (743 aa).

The active site involves His-50. Residues Tyr-53 and Lys-92 each coordinate ATP. Residue Glu-94 participates in Mg(2+) binding. Substrate contacts are provided by residues 95–98 (SHNH) and Arg-117. His-96 serves as the catalytic Proton acceptor. Residue Asp-118 participates in Mg(2+) binding. Gln-241 is a substrate binding site. A Mg(2+)-binding site is contributed by Asp-269. A substrate-binding site is contributed by 313–315 (ESQ). Residues Asp-495 and Gly-532 each coordinate ATP. Asn-533 is a binding site for Mg(2+). Ser-535 is a binding site for substrate.

Belongs to the FGAMS family. Monomer. Part of the FGAM synthase complex composed of 1 PurL, 1 PurQ and 2 PurS subunits.

It localises to the cytoplasm. The catalysed reaction is N(2)-formyl-N(1)-(5-phospho-beta-D-ribosyl)glycinamide + L-glutamine + ATP + H2O = 2-formamido-N(1)-(5-O-phospho-beta-D-ribosyl)acetamidine + L-glutamate + ADP + phosphate + H(+). It participates in purine metabolism; IMP biosynthesis via de novo pathway; 5-amino-1-(5-phospho-D-ribosyl)imidazole from N(2)-formyl-N(1)-(5-phospho-D-ribosyl)glycinamide: step 1/2. Part of the phosphoribosylformylglycinamidine synthase complex involved in the purines biosynthetic pathway. Catalyzes the ATP-dependent conversion of formylglycinamide ribonucleotide (FGAR) and glutamine to yield formylglycinamidine ribonucleotide (FGAM) and glutamate. The FGAM synthase complex is composed of three subunits. PurQ produces an ammonia molecule by converting glutamine to glutamate. PurL transfers the ammonia molecule to FGAR to form FGAM in an ATP-dependent manner. PurS interacts with PurQ and PurL and is thought to assist in the transfer of the ammonia molecule from PurQ to PurL. This is Phosphoribosylformylglycinamidine synthase subunit PurL from Rhizobium etli (strain ATCC 51251 / DSM 11541 / JCM 21823 / NBRC 15573 / CFN 42).